The following is a 428-amino-acid chain: Tyrosine--tRNA ligase (428 aa).

Residue Tyr36 coordinates L-tyrosine. The short motif at Pro41–His50 is the 'HIGH' region element. 2 residues coordinate L-tyrosine: Tyr171 and Gln175. Residues Lys231 to Ser235 carry the 'KMSKS' region motif. Lys234 contacts ATP. The 58-residue stretch at Asp359 to Gly416 folds into the S4 RNA-binding domain.

It belongs to the class-I aminoacyl-tRNA synthetase family. TyrS type 1 subfamily. Homodimer.

The protein resides in the cytoplasm. It carries out the reaction tRNA(Tyr) + L-tyrosine + ATP = L-tyrosyl-tRNA(Tyr) + AMP + diphosphate + H(+). In terms of biological role, catalyzes the attachment of tyrosine to tRNA(Tyr) in a two-step reaction: tyrosine is first activated by ATP to form Tyr-AMP and then transferred to the acceptor end of tRNA(Tyr). This chain is Tyrosine--tRNA ligase, found in Mycolicibacterium fortuitum (Mycobacterium fortuitum).